We begin with the raw amino-acid sequence, 237 residues long: UPF0688 protein C1orf174 homolog (237 aa).

The tract at residues 1–187 is disordered; that stretch reads MRSRKLAGGV…LLDDDSNQPM (187 aa). The span at 11–28 shows a compositional bias: low complexity; sequence RSSARLRARSCSAASASA. Residues 29–47 are compositionally biased toward polar residues; the sequence is QDTHVTTSAQTACQTPSSH. Over residues 48-76 the composition is skewed to basic and acidic residues; the sequence is KATDRRTSKKFKYDKGHIVKSELQKHRSD. Position 183 is a phosphoserine (Ser-183).

This sequence belongs to the UPF0688 family.

The protein localises to the nucleus. This chain is UPF0688 protein C1orf174 homolog, found in Bos taurus (Bovine).